Reading from the N-terminus, the 139-residue chain is MDIREIQAALPHRYPMLLVDRVLEVSDDHIVAIKNVTINEPFFNGHFPHYPVMPGVLIMEALAQTAGVLELSKEENKGKLVFYAGMDKVKFKKQVVPGDQLVMTATFIKRRGTIAVVEARAEVDGKLAASGTLTFACGQ.

His-46 is a catalytic residue.

It belongs to the thioester dehydratase family. FabZ subfamily.

Its subcellular location is the cytoplasm. It catalyses the reaction a (3R)-hydroxyacyl-[ACP] = a (2E)-enoyl-[ACP] + H2O. Functionally, involved in unsaturated fatty acids biosynthesis. Catalyzes the dehydration of short chain beta-hydroxyacyl-ACPs and long chain saturated and unsaturated beta-hydroxyacyl-ACPs. The sequence is that of 3-hydroxyacyl-[acyl-carrier-protein] dehydratase FabZ from Streptococcus pyogenes serotype M1.